A 261-amino-acid polypeptide reads, in one-letter code: SURF1-like protein (261 aa).

The next 2 membrane-spanning stretches (helical) occupy residues 17 to 37 and 223 to 243; these read LYWA…WQIF and LSYI…WVFL.

This sequence belongs to the SURF1 family.

It is found in the mitochondrion inner membrane. Functionally, probably involved in the biogenesis of the COX complex. This chain is SURF1-like protein, found in Monosiga brevicollis (Choanoflagellate).